The following is a 404-amino-acid chain: Cysteine desulfurase IscS (404 aa).

Pyridoxal 5'-phosphate is bound by residues 75–76, asparagine 155, glutamine 183, and 203–205; these read AT and SGH. At lysine 206 the chain carries N6-(pyridoxal phosphate)lysine. Position 243 (threonine 243) interacts with pyridoxal 5'-phosphate. The active-site Cysteine persulfide intermediate is the cysteine 328. Cysteine 328 is a binding site for [2Fe-2S] cluster.

It belongs to the class-V pyridoxal-phosphate-dependent aminotransferase family. NifS/IscS subfamily. In terms of assembly, homodimer. Forms a heterotetramer with IscU, interacts with other sulfur acceptors. The cofactor is pyridoxal 5'-phosphate.

It localises to the cytoplasm. The enzyme catalyses (sulfur carrier)-H + L-cysteine = (sulfur carrier)-SH + L-alanine. The protein operates within cofactor biosynthesis; iron-sulfur cluster biosynthesis. Master enzyme that delivers sulfur to a number of partners involved in Fe-S cluster assembly, tRNA modification or cofactor biosynthesis. Catalyzes the removal of elemental sulfur atoms from cysteine to produce alanine. Functions as a sulfur delivery protein for Fe-S cluster synthesis onto IscU, an Fe-S scaffold assembly protein, as well as other S acceptor proteins. In Pectobacterium atrosepticum (strain SCRI 1043 / ATCC BAA-672) (Erwinia carotovora subsp. atroseptica), this protein is Cysteine desulfurase IscS.